Here is a 291-residue protein sequence, read N- to C-terminus: Pre-mRNA-splicing factor SPP381 (291 aa).

Disordered regions lie at residues 1–99 and 239–266; these read MSFR…PLPR and EKEKLDHKKQRSAEKVEKSHNNNRYKIT. Polar residues-rich tracts occupy residues 28–41 and 52–62; these read QNVSLTEKSASLSH and TGKNRTPNDGQ. Acidic residues predominate over residues 63-91; that stretch reads ESNESDGSPESDESPESEESSDNSDSSDS. A compositionally biased stretch (basic and acidic residues) spans 239–258; that stretch reads EKEKLDHKKQRSAEKVEKSH.

The protein belongs to the SPP381 family. In terms of assembly, component of the U4/U6-U5 tri-snRNP complex composed of the U4, U6 and U5 snRNAs and at least PRP3, PRP4, PRP6, PRP8, PRP18, PRP31, PRP38, SNU13, SNU23, SNU66, SNU114, SPP381, SMB1, SMD1, SMD2, SMD3, SMX2, SMX3, LSM2, LSM3, LSM4, LSM5, LSM6, LSM7, LSM8, BRR2 and DIB1. Interacts with PRP38.

It is found in the nucleus. Functionally, component of the spliceosome and rRNA processing machinery. In association with the spliceosomal U4/U6.U5 tri-snRNP particle, required for splicing of pre-mRNA. The protein is Pre-mRNA-splicing factor SPP381 (SPP381) of Saccharomyces cerevisiae (strain ATCC 204508 / S288c) (Baker's yeast).